Here is a 136-residue protein sequence, read N- to C-terminus: Small ribosomal subunit protein uS9 (136 aa).

A disordered region spans residues 97–136 (SPDNRKPLKTEGHLSRDPRAKERRKYGLKKARKAPQFSKR). The span at 98–116 (PDNRKPLKTEGHLSRDPRA) shows a compositional bias: basic and acidic residues. The segment covering 117–136 (KERRKYGLKKARKAPQFSKR) has biased composition (basic residues).

The protein belongs to the universal ribosomal protein uS9 family.

This chain is Small ribosomal subunit protein uS9, found in Prochlorococcus marinus (strain MIT 9301).